The sequence spans 216 residues: MGQKINPLGFRLGTTQSHDSIWFAQPTNYSENIQEDKKIRDCIKNYIQKNIRISSGVEGIGQIKIQKRIDLIQVIIYMGFPKLLIEGKSQKIEELQTNMQKKLNCVNRKLNIAIVKVANAYKHPNIIAEFIAGQLKNRVSFRKAMKKAIELTEQAGTKGVQVQIAGRIDGKEIARVEWIREGRVPLQTIRAKIDYCCYTVRTIYGVLGIKVWIFSK.

The KH type-2 domain maps to 43–118; that stretch reads IKNYIQKNIR…KLNIAIVKVA (76 aa).

This sequence belongs to the universal ribosomal protein uS3 family. Part of the 30S ribosomal subunit.

The protein localises to the plastid. The protein resides in the chloroplast. The sequence is that of Small ribosomal subunit protein uS3c (rps3) from Glycine max (Soybean).